Consider the following 118-residue polypeptide: Small ribosomal subunit protein uS13 (118 aa).

The interval 93–118 is disordered; the sequence is RNLPVRGQNTKNNARTRKGPTRPLKR. Positions 106-118 are enriched in basic residues; sequence ARTRKGPTRPLKR.

It belongs to the universal ribosomal protein uS13 family. Part of the 30S ribosomal subunit. Forms a loose heterodimer with protein S19. Forms two bridges to the 50S subunit in the 70S ribosome.

In terms of biological role, located at the top of the head of the 30S subunit, it contacts several helices of the 16S rRNA. In the 70S ribosome it contacts the 23S rRNA (bridge B1a) and protein L5 of the 50S subunit (bridge B1b), connecting the 2 subunits; these bridges are implicated in subunit movement. Contacts the tRNAs in the A and P-sites. The sequence is that of Small ribosomal subunit protein uS13 from Psychrobacter cryohalolentis (strain ATCC BAA-1226 / DSM 17306 / VKM B-2378 / K5).